The chain runs to 1107 residues: Rho GTPase-activating protein 39 (1107 aa).

Positions 1–21 are disordered; that stretch reads MSQAQDYECRSHHVDEQEPRI. Ser2 is subject to N-acetylserine. Over residues 7–19 the composition is skewed to basic and acidic residues; it reads YECRSHHVDEQEP. 2 WW domains span residues 25–58 and 63–97; these read STRL…PPAG and RTSE…RPQN. The segment covering 111-122 has biased composition (polar residues); it reads QNTESPRASADN. Disordered stretches follow at residues 111-173, 218-267, 282-311, and 326-370; these read QNTE…PPGV, PSFL…PERR, SPLL…LYEE, and MDVQ…LMRT. Residues 123 to 136 show a composition bias toward low complexity; that stretch reads SPGRGSRDGSTGSS. The segment covering 242-254 has biased composition (polar residues); it reads SGSQHSPNLQTFV. Ser282 carries the phosphoserine modification. Composition is skewed to polar residues over residues 331 to 343 and 353 to 369; these read EANS…SPQR and LQTT…QLMR. Ser380, Ser384, Ser402, and Ser403 each carry phosphoserine. Disordered stretches follow at residues 404–429, 441–529, and 563–585; these read PKLR…QPSP, SGDY…RASL, and MKQR…GAVP. A compositionally biased stretch (polar residues) spans 470-484; the sequence is SWSSQQDTMSSTGYS. Ser597, Ser683, Ser708, and Ser719 each carry phosphoserine. Residues 715 to 867 form the MyTH4 domain; the sequence is WSSESIKKPM…PYVEEPDGVA (153 aa). In terms of domain architecture, Rho-GAP spans 914–1102; sequence SALQEVMSMQ…VLIQHLDTSF (189 aa).

It is found in the nucleus. The sequence is that of Rho GTPase-activating protein 39 (Arhgap39) from Mus musculus (Mouse).